Here is a 562-residue protein sequence, read N- to C-terminus: Phosphoglucomutase-1 (562 aa).

N-acetylmethionine is present on Met1. Position 16 is an N6-acetyllysine (Lys16). Arg23 contributes to the alpha-D-glucose 1,6-bisphosphate binding site. Thr115 carries the post-translational modification Phosphothreonine. Ser117 is a binding site for alpha-D-glucose 1,6-bisphosphate. The Phosphoserine intermediate role is filled by Ser117. Ser117 serves as a coordination point for Mg(2+). A phosphoserine mark is found at Ser117 and Ser134. Phosphothreonine is present on Thr185. A Phosphoserine modification is found at Ser213. Positions 288, 290, and 292 each coordinate Mg(2+). Positions 292 and 293 each coordinate alpha-D-glucose 1,6-bisphosphate. Lys349 carries the N6-acetyllysine modification. Tyr353 is subject to Phosphotyrosine. Thr357 is a binding site for alpha-D-glucose 1,6-bisphosphate. Ser369 carries the post-translational modification Phosphoserine. Alpha-D-glucose 1,6-bisphosphate-binding residues include Glu376, Ser378, and Lys389. Ser378 is modified (phosphoserine). Lys419 carries the post-translational modification N6-succinyllysine. Thr467 is modified (phosphothreonine; by PAK1). Phosphoserine occurs at positions 485 and 505. Thr507 is subject to Phosphothreonine. Phosphoserine is present on residues Ser509 and Ser541.

Belongs to the phosphohexose mutase family. Monomer. Mg(2+) is required as a cofactor. In terms of processing, isoform 2 is the major calmodulin-dependent phosphoprotein in junctional skeletal sarcoplasmic reticulum vesicles. Phosphorylation at Thr-467 by PAK1 significantly enhances enzymatic activity.

Its subcellular location is the cytoplasm. It localises to the sarcoplasmic reticulum. The enzyme catalyses alpha-D-glucose 1-phosphate = alpha-D-glucose 6-phosphate. It catalyses the reaction O-phospho-L-seryl-[protein] + alpha-D-glucose 1-phosphate = alpha-D-glucose 1,6-bisphosphate + L-seryl-[protein]. The catalysed reaction is alpha-D-glucose 1,6-bisphosphate + L-seryl-[protein] = O-phospho-L-seryl-[protein] + alpha-D-glucose 6-phosphate. Its activity is regulated as follows. Glucose-1,6-bisphosphate enhances phosphorylation of the active site Ser-117, and thereby increases enzyme activity. In terms of biological role, catalyzes the reversible isomerization of alpha-D-glucose 1-phosphate to alpha-D-glucose 6-phosphate. The mechanism proceeds via the intermediate compound alpha-D-glucose 1,6-bisphosphate. This enzyme participates in both the breakdown and synthesis of glucose. This Oryctolagus cuniculus (Rabbit) protein is Phosphoglucomutase-1 (PGM1).